A 99-amino-acid chain; its full sequence is Antitoxin VapB47 (99 aa).

The protein belongs to the phD/YefM antitoxin family.

In terms of biological role, antitoxin component of a type II toxin-antitoxin (TA) system. The protein is Antitoxin VapB47 (vapB47) of Mycobacterium tuberculosis (strain CDC 1551 / Oshkosh).